The sequence spans 334 residues: Nucleoid-associated protein plu2870 (334 aa).

It belongs to the YejK family.

Its subcellular location is the cytoplasm. The protein resides in the nucleoid. This Photorhabdus laumondii subsp. laumondii (strain DSM 15139 / CIP 105565 / TT01) (Photorhabdus luminescens subsp. laumondii) protein is Nucleoid-associated protein plu2870.